The following is a 1375-amino-acid chain: MLDNKLGNRLRVDFSNISKQIEIPNLLQLQKKSFDYFLNLDNGESGIEKVFKSIFPIHDPQNRLSLEYVSSEIGKPKYTIRECMERGLTYSVNLKMKIRLTLHEKDEKTGEKVGVKDIKEQEIYIREIPLMTDRVSFIINGVERVVVNQLHRSPGVIFKEEESSTVANKLVYTAQIIPDRGSWLYFEYDAKDVLYVRINKRRKVPVTMLFRALGYKKQDIIKLFYPIQTIHVKKDKFLTEFNPNDFMDRIEYDIKDEKGKIVHQAGKRLTKKKAEQLIKDGLKWIEYPVEILLNRYLANPIIDKESGEVLFDSLTLLDESKLAKIKEQKSFDIANDLANGVDAAIINSFAQDGETLKLLKQSENIDDENDLAAIRIYKVMRPGEPVVKDAAKAFVNDLFFNPERYDLTKVGRMKMNHKLGLEVPEYVTVLTNEDIIKTAKYLIKVKNGKGHIDDRDHLGNRRIRSIGELLANELHLGLAKMQKAIRDKFTSLNADLDKVMPYDLINPKMITTTIIEFFTGGQLSQFMDQTNPLSEVTHKRRLSALGEGGLVKERAGFEVRDVHATHYGRICPVETPEGQNIGLINTLSTYAKVNELGFVEAPYRKVVNGKVTNEVVYLTATQEEGLFIAPASTKVDAKGNIVEEFVEARQDGETILARREEVQLIDLCSGMVVGVAASLIPFLEHDDANRALMGSNMQRQAVPLLTASAPIVGTGMEQIIARDAWEAVKAKRGGVVEKVDNKSIFILGEDDKGPFIDHYTMEKNLRTNQNTNYIQHPIVKKGDIVKAGQIIADGPSMDQGELAIGKNALIAFMPWNGYNYEDAIVVSERIIREDTFTSVHIYEKEIEARELKDGIEEITKDIPNVKEEDVAHLDESGIAKIGTHIKPGMILVGKVSPKGEVKPTPEERLLRAIFGEKAGHVVNKSLYATASLEGVVVDVKIFTKKGYEKDDRAIKSYDKEKMALEKEHHDRLLMMDREEMLRVCALLSKAPLNSDQKIGDKNYKKGQTADISELEKINRFTLTTLIKAYSKEIQKEYDDLKNHFQNEKKKLKAEHDEKLEILEKDDILPSGVIKLVKVYIATKRKLKVGDKMAGRHGNKGIVSTIVPEVDMPYLPNGKSVDIALNPLGVPSRMNIGQILESHLGLIGLRLGDQIQEIFDRKQKDFLKELRAKMLEICSIPRLASEKEFIKSLSDEELLNYARDWSKGVKFATPVFEGVNIEEFSKLFEMAKIDMDGKTELYDGRTGEKIAERVHVGCMYMLKLHHLVDEKVHARSTGPYSLVTQQPVGGKALFGGQRFGEMEVWALEAYGAAHTLREMLTIKSDDVEGRFSAYKALTKGENVPATGIPETFFVLTNELKSLALDVEIFDKDEDNE.

The protein belongs to the RNA polymerase beta chain family. As to quaternary structure, the RNAP catalytic core consists of 2 alpha, 1 beta, 1 beta' and 1 omega subunit. When a sigma factor is associated with the core the holoenzyme is formed, which can initiate transcription.

The catalysed reaction is RNA(n) + a ribonucleoside 5'-triphosphate = RNA(n+1) + diphosphate. Functionally, DNA-dependent RNA polymerase catalyzes the transcription of DNA into RNA using the four ribonucleoside triphosphates as substrates. This is DNA-directed RNA polymerase subunit beta from Campylobacter jejuni subsp. jejuni serotype O:6 (strain 81116 / NCTC 11828).